A 138-amino-acid polypeptide reads, in one-letter code: Small ribosomal subunit protein uS11 (138 aa).

Disordered stretches follow at residues M1–A29 and G117–V138. A compositionally biased stretch (basic residues) spans K13 to K22.

The protein belongs to the universal ribosomal protein uS11 family. As to quaternary structure, part of the 30S ribosomal subunit. Interacts with proteins S7 and S18. Binds to IF-3.

Located on the platform of the 30S subunit, it bridges several disparate RNA helices of the 16S rRNA. Forms part of the Shine-Dalgarno cleft in the 70S ribosome. The protein is Small ribosomal subunit protein uS11 of Mycobacterium ulcerans (strain Agy99).